A 161-amino-acid polypeptide reads, in one-letter code: MKTIPSFTIDHIRLLRGIYVSRKDEVGGETVTTFDIRMKEPNREPALGQGALHTIEHLAATYLRNHPIWSDKIVYWGPMGCLTGNYLLMKGDLKSEDIVELMQETFRFVADFEGEVPGAAPKDCGNYLLHDLPMAKWESAKYLHEVLEHMTKDNLYYPTKE.

3 residues coordinate Fe cation: H53, H57, and C124.

Belongs to the LuxS family. In terms of assembly, homodimer. It depends on Fe cation as a cofactor.

The enzyme catalyses S-(5-deoxy-D-ribos-5-yl)-L-homocysteine = (S)-4,5-dihydroxypentane-2,3-dione + L-homocysteine. Its function is as follows. Involved in the synthesis of autoinducer 2 (AI-2) which is secreted by bacteria and is used to communicate both the cell density and the metabolic potential of the environment. The regulation of gene expression in response to changes in cell density is called quorum sensing. Catalyzes the transformation of S-ribosylhomocysteine (RHC) to homocysteine (HC) and 4,5-dihydroxy-2,3-pentadione (DPD). The chain is S-ribosylhomocysteine lyase from Phocaeicola vulgatus (strain ATCC 8482 / DSM 1447 / JCM 5826 / CCUG 4940 / NBRC 14291 / NCTC 11154) (Bacteroides vulgatus).